The following is a 476-amino-acid chain: Aspartyl/glutamyl-tRNA(Asn/Gln) amidotransferase subunit B (476 aa).

The protein belongs to the GatB/GatE family. GatB subfamily. As to quaternary structure, heterotrimer of A, B and C subunits.

The catalysed reaction is L-glutamyl-tRNA(Gln) + L-glutamine + ATP + H2O = L-glutaminyl-tRNA(Gln) + L-glutamate + ADP + phosphate + H(+). The enzyme catalyses L-aspartyl-tRNA(Asn) + L-glutamine + ATP + H2O = L-asparaginyl-tRNA(Asn) + L-glutamate + ADP + phosphate + 2 H(+). Its function is as follows. Allows the formation of correctly charged Asn-tRNA(Asn) or Gln-tRNA(Gln) through the transamidation of misacylated Asp-tRNA(Asn) or Glu-tRNA(Gln) in organisms which lack either or both of asparaginyl-tRNA or glutaminyl-tRNA synthetases. The reaction takes place in the presence of glutamine and ATP through an activated phospho-Asp-tRNA(Asn) or phospho-Glu-tRNA(Gln). The polypeptide is Aspartyl/glutamyl-tRNA(Asn/Gln) amidotransferase subunit B (Lacticaseibacillus casei (strain BL23) (Lactobacillus casei)).